A 98-amino-acid chain; its full sequence is NADH-ubiquinone oxidoreductase chain 4L (98 aa).

A run of 3 helical transmembrane segments spans residues 1–21, 29–49, and 61–81; these read MSLV…GLLM, SLLC…LIIL, and IILL…LVMV.

The protein belongs to the complex I subunit 4L family. As to quaternary structure, core subunit of respiratory chain NADH dehydrogenase (Complex I) which is composed of 45 different subunits.

The protein resides in the mitochondrion inner membrane. The catalysed reaction is a ubiquinone + NADH + 5 H(+)(in) = a ubiquinol + NAD(+) + 4 H(+)(out). In terms of biological role, core subunit of the mitochondrial membrane respiratory chain NADH dehydrogenase (Complex I) which catalyzes electron transfer from NADH through the respiratory chain, using ubiquinone as an electron acceptor. Part of the enzyme membrane arm which is embedded in the lipid bilayer and involved in proton translocation. The sequence is that of NADH-ubiquinone oxidoreductase chain 4L (MT-ND4L) from Hippopotamus amphibius (Hippopotamus).